The sequence spans 179 residues: Large ribosomal subunit protein uL5 (179 aa).

It belongs to the universal ribosomal protein uL5 family. In terms of assembly, part of the 50S ribosomal subunit; part of the 5S rRNA/L5/L18/L25 subcomplex. Contacts the 5S rRNA and the P site tRNA. Forms a bridge to the 30S subunit in the 70S ribosome.

Functionally, this is one of the proteins that bind and probably mediate the attachment of the 5S RNA into the large ribosomal subunit, where it forms part of the central protuberance. In the 70S ribosome it contacts protein S13 of the 30S subunit (bridge B1b), connecting the 2 subunits; this bridge is implicated in subunit movement. Contacts the P site tRNA; the 5S rRNA and some of its associated proteins might help stabilize positioning of ribosome-bound tRNAs. In Klebsiella pneumoniae (strain 342), this protein is Large ribosomal subunit protein uL5.